Consider the following 236-residue polypeptide: 2,3,4,5-tetrahydropyridine-2,6-dicarboxylate N-acetyltransferase (236 aa).

It belongs to the transferase hexapeptide repeat family. DapH subfamily.

It catalyses the reaction (S)-2,3,4,5-tetrahydrodipicolinate + acetyl-CoA + H2O = L-2-acetamido-6-oxoheptanedioate + CoA. Its pathway is amino-acid biosynthesis; L-lysine biosynthesis via DAP pathway; LL-2,6-diaminopimelate from (S)-tetrahydrodipicolinate (acetylase route): step 1/3. In terms of biological role, catalyzes the transfer of an acetyl group from acetyl-CoA to tetrahydrodipicolinate. The sequence is that of 2,3,4,5-tetrahydropyridine-2,6-dicarboxylate N-acetyltransferase from Geobacillus kaustophilus (strain HTA426).